The primary structure comprises 209 residues: Small ribosomal subunit protein uS5 (209 aa).

The S5 DRBM domain maps to 48-111; sequence LEDEVLDINM…DAAKLNITYI (64 aa).

It belongs to the universal ribosomal protein uS5 family. Part of the 30S ribosomal subunit. Contacts protein S4.

In terms of biological role, with S4 and S12 plays an important role in translational accuracy. The polypeptide is Small ribosomal subunit protein uS5 (Methanosarcina mazei (strain ATCC BAA-159 / DSM 3647 / Goe1 / Go1 / JCM 11833 / OCM 88) (Methanosarcina frisia)).